The chain runs to 290 residues: Shikimate dehydrogenase (NADP(+)) (290 aa).

Residues 18–20 and threonine 66 contribute to the shikimate site; that span reads SYS. The active-site Proton acceptor is lysine 70. Glutamate 82 lines the NADP(+) pocket. Shikimate is bound by residues asparagine 91 and aspartate 106. NADP(+)-binding positions include 130-134 and methionine 229; that span reads GSGGA. Shikimate is bound at residue tyrosine 231. Residue glycine 252 participates in NADP(+) binding.

This sequence belongs to the shikimate dehydrogenase family. In terms of assembly, homodimer.

The enzyme catalyses shikimate + NADP(+) = 3-dehydroshikimate + NADPH + H(+). It participates in metabolic intermediate biosynthesis; chorismate biosynthesis; chorismate from D-erythrose 4-phosphate and phosphoenolpyruvate: step 4/7. Involved in the biosynthesis of the chorismate, which leads to the biosynthesis of aromatic amino acids. Catalyzes the reversible NADPH linked reduction of 3-dehydroshikimate (DHSA) to yield shikimate (SA). In Chlorobium phaeovibrioides (strain DSM 265 / 1930) (Prosthecochloris vibrioformis (strain DSM 265)), this protein is Shikimate dehydrogenase (NADP(+)).